The following is a 187-amino-acid chain: Virulence protein ATR13 (187 aa).

Positions 1-19 (MRLVHAVLLPGIIVFVSNG) are cleaved as a signal peptide. Residues 38–41 (RQLR) carry the RxLR motif. The leucine heptad repeat region stretch occupies residues 50 to 92 (LSRASFGLGKAQDPLDKFFRKIINSRKPIETSYSAKGIHEKII). 4 tandem repeats follow at residues 93 to 103 (KAYDRHVFESK), 104 to 114 (KAHDRHVSKSK), 115 to 125 (KAHGRHVSKSK), and 126 to 136 (MAHDRHVSKSE). Residues 93-136 (KAYDRHVFESKKAHDRHVSKSKKAHGRHVSKSKMAHDRHVSKSE) form a 4 X 11 AA tandem repeats region. The interval 104-136 (KAHDRHVSKSKKAHGRHVSKSKMAHDRHVSKSE) is disordered. Basic residues predominate over residues 111–125 (SKSKKAHGRHVSKSK). Positions 126–136 (MAHDRHVSKSE) are enriched in basic and acidic residues. The segment at 137-187 (KAPIQYASVADYLKKIYPGTDIERIVSTLKRHDEVGAKDLGAKLQTAVASQ) is highly variable C-terminus domain.

The protein belongs to the RxLR effector family.

The protein resides in the secreted. Its subcellular location is the host nucleus. It is found in the host nucleolus. It localises to the host cytoplasm. Its function is as follows. Secreted effector that acts as an elicitor of hypersensitive response (HR) specifically on plants carrying defense protein RPP13. Recognition of ATR13 by RPP13 initiates defense responses that are effective against oomycete, bacterial and viral pathogens. Due to high polymorphism, ATR13-Emoy2 does not recognize RPP13-Nd, the RPP13 defense protein from Arabidopsis thaliana ecotype Niederzenz. ATR13-Emoy2 is recognized by RPP13 variants RPP13-UKID44, RPP13-UKID65 and RPP13-UKID71. This is Virulence protein ATR13 from Hyaloperonospora arabidopsidis (strain Emoy2) (Downy mildew agent).